A 129-amino-acid chain; its full sequence is Small ribosomal subunit protein uS11 (129 aa).

It belongs to the universal ribosomal protein uS11 family. In terms of assembly, part of the 30S ribosomal subunit. Interacts with proteins S7 and S18. Binds to IF-3.

Located on the platform of the 30S subunit, it bridges several disparate RNA helices of the 16S rRNA. Forms part of the Shine-Dalgarno cleft in the 70S ribosome. The sequence is that of Small ribosomal subunit protein uS11 from Aeromonas hydrophila subsp. hydrophila (strain ATCC 7966 / DSM 30187 / BCRC 13018 / CCUG 14551 / JCM 1027 / KCTC 2358 / NCIMB 9240 / NCTC 8049).